We begin with the raw amino-acid sequence, 340 residues long: Glyceraldehyde-3-phosphate dehydrogenase (340 aa).

NAD(+)-binding positions include 11-12 (TI) and Gly-109. D-glyceraldehyde 3-phosphate is bound at residue 138–140 (SCN). Catalysis depends on Cys-139, which acts as the Nucleophile. Position 167 (Arg-167) interacts with NAD(+). 193-194 (HA) is a D-glyceraldehyde 3-phosphate binding site. Gln-300 contributes to the NAD(+) binding site.

The protein belongs to the glyceraldehyde-3-phosphate dehydrogenase family. Homotetramer.

The protein resides in the cytoplasm. The enzyme catalyses D-glyceraldehyde 3-phosphate + phosphate + NADP(+) = (2R)-3-phospho-glyceroyl phosphate + NADPH + H(+). It catalyses the reaction D-glyceraldehyde 3-phosphate + phosphate + NAD(+) = (2R)-3-phospho-glyceroyl phosphate + NADH + H(+). The protein operates within carbohydrate degradation; glycolysis; pyruvate from D-glyceraldehyde 3-phosphate: step 1/5. In Metallosphaera sedula (strain ATCC 51363 / DSM 5348 / JCM 9185 / NBRC 15509 / TH2), this protein is Glyceraldehyde-3-phosphate dehydrogenase.